The sequence spans 210 residues: Large ribosomal subunit protein bL25 (210 aa).

The interval 185–210 is disordered; that stretch reads APEPAGQPEVPPEPAEEAKAKTIEKE. Residues 200 to 210 show a composition bias toward basic and acidic residues; that stretch reads EEAKAKTIEKE.

Belongs to the bacterial ribosomal protein bL25 family. CTC subfamily. As to quaternary structure, part of the 50S ribosomal subunit; part of the 5S rRNA/L5/L18/L25 subcomplex. Contacts the 5S rRNA. Binds to the 5S rRNA independently of L5 and L18.

In terms of biological role, this is one of the proteins that binds to the 5S RNA in the ribosome where it forms part of the central protuberance. The polypeptide is Large ribosomal subunit protein bL25 (Desulforamulus reducens (strain ATCC BAA-1160 / DSM 100696 / MI-1) (Desulfotomaculum reducens)).